We begin with the raw amino-acid sequence, 519 residues long: Developmental regulatory protein wetA (519 aa).

6 disordered regions span residues 105 to 165, 270 to 294, 301 to 320, 325 to 344, 389 to 452, and 470 to 495; these read PSRP…MRSS, PSSA…WQSD, LSFT…PMPS, QQAS…NVGN, SQIH…GSNK, and LTGV…RRRK. Residues 108 to 118 show a composition bias toward low complexity; sequence PTATHALSTSP. Residues 155–165 show a composition bias toward polar residues; that stretch reads QSFSPSLMRSS. A compositionally biased stretch (polar residues) spans 301-315; that stretch reads LSFTPDLQGQDSQWW. Positions 389–400 are enriched in polar residues; that stretch reads SQIHNVSRSPSL. Over residues 419–428 the composition is skewed to basic residues; the sequence is PTHRRTHSRK. The segment covering 435–452 has biased composition (low complexity); sequence NAPKPAKASGSSSRGSNK.

Belongs to the wetA family.

In terms of biological role, brlA, abaA and wetA are pivotal regulators of conidiophore development and conidium maturation. They act individually and together to regulate their own expression and that of numerous other sporulation-specific genes. This chain is Developmental regulatory protein wetA, found in Penicillium camembertii.